The chain runs to 525 residues: MIARQSSVRGASRGFSSGSAIAGGVKRVAFSSGSMSGGAGRCSSGGFGSRSLYNLGGHKSISMSVAGSCQGGGYGGAGGFGVGGYGAGFGAGGFGGGFGGSFNGRGGPGFPVCPAGGIQEVTINQSLLTPLQVEIDPEIQKIRTAEREQIKTLNNKFASFIDKVRFLEQQNKVLETKWNLLQQQTTTTSPKSLDPFFETYINALRKNLDTLSNDKGRLQSELKMMQDSVEDFKTKYEEEINKRTAAENDFVVLKKDVDAAYMIKVELEAKMESLKDEINFTRVLYEAELAQMQTHVSDTSVVLSMDNNRNLDLDGIIAEVRAQYEDIARKSKAEVESWYQIKVQQLQMSADQHGDSLKTTKNEISELNRMIQRLRAEIENIKKQSQTLQASVADAEQRGELALKDAYSKRAELETALQKAKEDLARLLRDYQALMNVKLALDVEIATYRKLLEGEECRMSGECKSAVSISVVGGSASIGGSGLGLGSGFCSGSGSGSGFGFGGGIYGGSGSKITSSATITKRSPR.

The tract at residues 1-145 (MIARQSSVRG…DPEIQKIRTA (145 aa)) is head. R13 is subject to Omega-N-methylarginine. A coil 1A region spans residues 146–181 (EREQIKTLNNKFASFIDKVRFLEQQNKVLETKWNLL). The region spanning 146–459 (EREQIKTLNN…KLLEGEECRM (314 aa)) is the IF rod domain. Residues 182-200 (QQQTTTTSPKSLDPFFETY) are linker 1. The interval 201–292 (INALRKNLDT…VLYEAELAQM (92 aa)) is coil 1B. The interval 293–316 (QTHVSDTSVVLSMDNNRNLDLDGI) is linker 12. Residues 317-455 (IAEVRAQYED…ATYRKLLEGE (139 aa)) are coil 2. The interval 456–524 (ECRMSGECKS…SSATITKRSP (69 aa)) is tail.

The protein belongs to the intermediate filament family. In terms of assembly, heterotetramer of two type I and two type II keratins. Keratin-4 is generally associated with keratin-13. In terms of tissue distribution, expressed in the dorsal and ventral epithelium of the tongue. Highest expression levels are detected in the suprabasal layer with low levels detected in the basal cell layer. Within the suprabasal layer expression is highest in the spinous cells, decreases in the granular cells and is not detected in the stratum corneum.

The protein is Keratin, type II cytoskeletal 4 (Krt4) of Mus musculus (Mouse).